A 171-amino-acid polypeptide reads, in one-letter code: Lipoprotein signal peptidase (171 aa).

Transmembrane regions (helical) follow at residues 12 to 32 (WYWV…WVLA), 67 to 87 (WQRW…TVWL), and 93 to 113 (SLLK…GNLV). Catalysis depends on residues D123 and D141. A helical membrane pass occupies residues 137 to 157 (FNIADSAICIGAVLIIWDAFL).

The protein belongs to the peptidase A8 family.

It localises to the cell inner membrane. The enzyme catalyses Release of signal peptides from bacterial membrane prolipoproteins. Hydrolyzes -Xaa-Yaa-Zaa-|-(S,diacylglyceryl)Cys-, in which Xaa is hydrophobic (preferably Leu), and Yaa (Ala or Ser) and Zaa (Gly or Ala) have small, neutral side chains.. It participates in protein modification; lipoprotein biosynthesis (signal peptide cleavage). Functionally, this protein specifically catalyzes the removal of signal peptides from prolipoproteins. The protein is Lipoprotein signal peptidase of Shewanella baltica (strain OS195).